Consider the following 405-residue polypeptide: FAD-dependent monooxygenase thnD (405 aa).

FAD-binding residues include Glu30, Ala45, Arg106, Asp308, and Gly321.

This sequence belongs to the paxM FAD-dependent monooxygenase family. The cofactor is FAD.

Its function is as follows. FAD-dependent monooxygenase; part of the gene cluster that produces the tetronate natural products trihazones. Transcription analysis of thnD confirmed this gene is expressed, hence its role in the biosynthetic pathway remains cryptic. The pathway begins with the formation of trihazone A by the hybrid PKS-NRPS synthetase thnA and the trans-enoyl reductase thnE. Trihazone A is further decarboxylated by the 2-oxoglutarate-dependent dioxygenase thnC to produce trihazone D. The function of the FAD-dependent monooxygenase thnD has still to be identified. The protein is FAD-dependent monooxygenase thnD of Trichoderma harzianum (Hypocrea lixii).